The sequence spans 169 residues: MYKYLQVGKIVNTFGLKGEVKVIPLTDEVDRFSELEYVLLEDNLSTKLTIERYRVKDNIVIIKFKEISSIDEAQKLKNRYIVIERERAKKLPKDTYFICDIIGLEVYDLDGRKLGRIKDVLKTGSNDVYICDSYIGKKDILIPALKEIVKEVNIEEGYMKIKVVEGLLD.

Residues 92-167 (PKDTYFICDI…YMKIKVVEGL (76 aa)) enclose the PRC barrel domain.

The protein belongs to the RimM family. Binds ribosomal protein uS19.

The protein localises to the cytoplasm. An accessory protein needed during the final step in the assembly of 30S ribosomal subunit, possibly for assembly of the head region. Essential for efficient processing of 16S rRNA. May be needed both before and after RbfA during the maturation of 16S rRNA. It has affinity for free ribosomal 30S subunits but not for 70S ribosomes. This chain is Ribosome maturation factor RimM, found in Caldicellulosiruptor bescii (strain ATCC BAA-1888 / DSM 6725 / KCTC 15123 / Z-1320) (Anaerocellum thermophilum).